The primary structure comprises 212 residues: 7-carboxy-7-deazaguanine synthase (212 aa).

Residues 22–24 and Arg-37 contribute to the substrate site; that span reads LQG. Residues 28 to 212 enclose the Radical SAM core domain; it reads NTGMPAVFVR…VQTHKWAGIE (185 aa). Residues Cys-41, Cys-45, and Cys-48 each coordinate [4Fe-4S] cluster. Thr-50 lines the Mg(2+) pocket. Thr-78 lines the substrate pocket. S-adenosyl-L-methionine is bound by residues Gly-80 and 122-124; that span reads SPK.

The protein belongs to the radical SAM superfamily. 7-carboxy-7-deazaguanine synthase family. Homodimer. Requires [4Fe-4S] cluster as cofactor. S-adenosyl-L-methionine serves as cofactor. Mg(2+) is required as a cofactor.

It carries out the reaction 6-carboxy-5,6,7,8-tetrahydropterin + H(+) = 7-carboxy-7-deazaguanine + NH4(+). The protein operates within purine metabolism; 7-cyano-7-deazaguanine biosynthesis. Its function is as follows. Catalyzes the complex heterocyclic radical-mediated conversion of 6-carboxy-5,6,7,8-tetrahydropterin (CPH4) to 7-carboxy-7-deazaguanine (CDG), a step common to the biosynthetic pathways of all 7-deazapurine-containing compounds. In Neisseria meningitidis serogroup B (strain ATCC BAA-335 / MC58), this protein is 7-carboxy-7-deazaguanine synthase.